Here is a 150-residue protein sequence, read N- to C-terminus: Single-stranded DNA-binding protein rim1, mitochondrial (150 aa).

Residues 1–22 (MLFLKSSRAFSKRLFSSSTVRY) constitute a mitochondrion transit peptide. Residues 25-125 (IQRLTLTGNL…HVSADVLFYP (101 aa)) form the SSB domain. Positions 127-150 (NKNGDESGEETHPELDADPMINSF) are disordered. Basic and acidic residues predominate over residues 128 to 141 (KNGDESGEETHPEL).

The protein localises to the mitochondrion. This protein binds preferentially and cooperatively to ss-DNA. Involved in mitochondrial DNA replication. This chain is Single-stranded DNA-binding protein rim1, mitochondrial (rim1), found in Schizosaccharomyces pombe (strain 972 / ATCC 24843) (Fission yeast).